Consider the following 285-residue polypeptide: (3S)-malyl-CoA thioesterase (285 aa).

Substrate-binding residues include Arg70 and Glu122. The Mg(2+) site is built by Glu122 and Asp148.

Belongs to the HpcH/HpaI aldolase family. Homodimer or homotrimer. Mg(2+) serves as cofactor.

The enzyme catalyses (S)-malyl-CoA + H2O = (S)-malate + CoA + H(+). Reversibly inhibited by EDTA. Stimulated by the divalent cations Mg(2+) and Mn(2+). Its function is as follows. Catalyzes the hydrolysis of (3S)-malyl-CoA to (3S)-malate and free CoA. Inactive towards beta-methylmalyl-CoA and other CoA esters. This Cereibacter sphaeroides (strain ATCC 17023 / DSM 158 / JCM 6121 / CCUG 31486 / LMG 2827 / NBRC 12203 / NCIMB 8253 / ATH 2.4.1.) (Rhodobacter sphaeroides) protein is (3S)-malyl-CoA thioesterase.